Consider the following 275-residue polypeptide: Diaminopimelate epimerase (275 aa).

Residues N13, Q46, and N65 each contribute to the substrate site. Residue C74 is the Proton donor of the active site. Residues 75-76, N158, N191, and 209-210 each bind substrate; these read GN and ER. The Proton acceptor role is filled by C218. 219–220 serves as a coordination point for substrate; sequence GT.

It belongs to the diaminopimelate epimerase family. As to quaternary structure, homodimer.

Its subcellular location is the cytoplasm. It carries out the reaction (2S,6S)-2,6-diaminopimelate = meso-2,6-diaminopimelate. The protein operates within amino-acid biosynthesis; L-lysine biosynthesis via DAP pathway; DL-2,6-diaminopimelate from LL-2,6-diaminopimelate: step 1/1. Functionally, catalyzes the stereoinversion of LL-2,6-diaminopimelate (L,L-DAP) to meso-diaminopimelate (meso-DAP), a precursor of L-lysine and an essential component of the bacterial peptidoglycan. In Nitrosomonas europaea (strain ATCC 19718 / CIP 103999 / KCTC 2705 / NBRC 14298), this protein is Diaminopimelate epimerase.